The primary structure comprises 334 residues: 6-phosphogluconolactonase (334 aa).

Belongs to the cycloisomerase 2 family.

It carries out the reaction 6-phospho-D-glucono-1,5-lactone + H2O = 6-phospho-D-gluconate + H(+). The protein operates within carbohydrate degradation; pentose phosphate pathway; D-ribulose 5-phosphate from D-glucose 6-phosphate (oxidative stage): step 2/3. In terms of biological role, catalyzes the hydrolysis of 6-phosphogluconolactone to 6-phosphogluconate. This Yersinia pseudotuberculosis serotype IB (strain PB1/+) protein is 6-phosphogluconolactonase.